We begin with the raw amino-acid sequence, 614 residues long: Dihydroxy-acid dehydratase (614 aa).

Asp-81 lines the Mg(2+) pocket. Cys-122 contributes to the [2Fe-2S] cluster binding site. 2 residues coordinate Mg(2+): Asp-123 and Lys-124. The residue at position 124 (Lys-124) is an N6-carboxylysine. Position 193 (Cys-193) interacts with [2Fe-2S] cluster. Glu-489 serves as a coordination point for Mg(2+). Ser-515 functions as the Proton acceptor in the catalytic mechanism.

The protein belongs to the IlvD/Edd family. As to quaternary structure, homodimer. [2Fe-2S] cluster serves as cofactor. It depends on Mg(2+) as a cofactor.

It catalyses the reaction (2R)-2,3-dihydroxy-3-methylbutanoate = 3-methyl-2-oxobutanoate + H2O. It carries out the reaction (2R,3R)-2,3-dihydroxy-3-methylpentanoate = (S)-3-methyl-2-oxopentanoate + H2O. Its pathway is amino-acid biosynthesis; L-isoleucine biosynthesis; L-isoleucine from 2-oxobutanoate: step 3/4. It functions in the pathway amino-acid biosynthesis; L-valine biosynthesis; L-valine from pyruvate: step 3/4. Functionally, functions in the biosynthesis of branched-chain amino acids. Catalyzes the dehydration of (2R,3R)-2,3-dihydroxy-3-methylpentanoate (2,3-dihydroxy-3-methylvalerate) into 2-oxo-3-methylpentanoate (2-oxo-3-methylvalerate) and of (2R)-2,3-dihydroxy-3-methylbutanoate (2,3-dihydroxyisovalerate) into 2-oxo-3-methylbutanoate (2-oxoisovalerate), the penultimate precursor to L-isoleucine and L-valine, respectively. The chain is Dihydroxy-acid dehydratase from Cellvibrio japonicus (strain Ueda107) (Pseudomonas fluorescens subsp. cellulosa).